The chain runs to 411 residues: Intracellular hyaluronan-binding protein 4 (411 aa).

Ser-7 and Ser-36 each carry phosphoserine. Residues 42–62 (LREAEHRRQQQLQRKRRDEAA) are a coiled coil. Positions 42–271 (LREAEHRRQQ…ECQGTLDEES (230 aa)) are disordered. Arg-70 is modified (omega-N-methylarginine). Position 74 is a phosphoserine (Ser-74). Over residues 87–97 (GRRESQKERKS) the composition is skewed to basic and acidic residues. The residue at position 108 (Ser-108) is a Phosphoserine. Basic and acidic residues-rich tracts occupy residues 138–181 (VLER…DRPL) and 205–229 (DSFDQRGKRDFERYSSNDKTNRMED). Glycyl lysine isopeptide (Lys-Gly) (interchain with G-Cter in SUMO1); alternate cross-links involve residues Lys-212 and Lys-274. Residues Lys-212 and Lys-274 each participate in a glycyl lysine isopeptide (Lys-Gly) (interchain with G-Cter in SUMO2); alternate cross-link. Positions 279 to 301 (EVEEENQVQEMTLDEWKNLQEQT) form a coiled coil. Residues 296–313 (NLQEQTRPKPEFNIRKPE) are compositionally biased toward basic and acidic residues. The interval 296–318 (NLQEQTRPKPEFNIRKPESTVPS) is disordered. Lys-334 participates in a covalent cross-link: Glycyl lysine isopeptide (Lys-Gly) (interchain with G-Cter in SUMO1); alternate. Lys-334 is covalently cross-linked (Glycyl lysine isopeptide (Lys-Gly) (interchain with G-Cter in SUMO2); alternate). 2 positions are modified to phosphothreonine; by PKC: Thr-352 and Thr-373. The disordered stretch occupies residues 358-411 (NFGNLPRPGRGARGSTRGGRGRMRRTENYGPRAEVVTQDVAPNPDDPEDFPALA). Over residues 402-411 (DDPEDFPALA) the composition is skewed to acidic residues.

The protein belongs to the SERBP1-HABP4 family. In terms of assembly, associates with ribosomes; promoting ribosome stabilization. Interacts with EEF2/eEF2; promoting ribosome stabilization. Interacts with FMR1. Interacts with FXR1 and FXR2. Interacts with CHD3 (via C-terminus). Interacts (via C-terminus) with RACK1. Interacts with p53/TP53. Interacts (via N-terminus) with SRSF9; this interaction is direct. Interacts with SYNCRIP; this interaction is direct. Interacts with MEF2C (via N-terminus); this interaction decreases DNA-binding activity of MEF2C in myocardial cells in response to mechanical stress. Interacts with PRMT1 (via N-terminus). Interacts with SPIN1. In terms of processing, phosphorylated by phorbol 12-myristate 13-acetate (PMA)-activated PKC isoforms at Thr-352 and Thr-373. Methylated. Methylation is decreased by phorbol 12-myristate 13-acetate (PMA)-activated PKC, in vitro. Expressed in adult heart, brain, liver, kidney, testis, and in various embryonic tissues, but not in adult spleen, lung or skeletal muscle.

The protein resides in the nucleus. The protein localises to the cytoplasm. It is found in the stress granule. It localises to the sarcoplasm. Its subcellular location is the nuclear body. The protein resides in the nucleolus. The protein localises to the nucleus speckle. It is found in the cajal body. It localises to the gem. In terms of biological role, ribosome-binding protein that promotes ribosome hibernation, a process during which ribosomes are stabilized in an inactive state and preserved from proteasomal degradation. Acts via its association with EEF2/eEF2 factor at the A-site of the ribosome, promoting ribosome stabilization in an inactive state compatible with storage. Plays a key role in ribosome hibernation in the mature oocyte by promoting ribosome stabilization. Ribosomes, which are produced in large quantities during oogenesis, are stored and translationally repressed in the oocyte and early embryo. Also binds RNA, regulating transcription and pre-mRNA splicing. Binds (via C-terminus) to poly(U) RNA. Seems to play a role in PML-nuclear bodies formation. Negatively regulates DNA-binding activity of the transcription factor MEF2C in myocardial cells in response to mechanical stress. The sequence is that of Intracellular hyaluronan-binding protein 4 from Mus musculus (Mouse).